Reading from the N-terminus, the 192-residue chain is Orotate phosphoribosyltransferase (192 aa).

116–124 lines the 5-phospho-alpha-D-ribose 1-diphosphate pocket; the sequence is EDIVTTGLS. Residues T120 and R148 each coordinate orotate.

It belongs to the purine/pyrimidine phosphoribosyltransferase family. PyrE subfamily. Homodimer. It depends on Mg(2+) as a cofactor.

It carries out the reaction orotidine 5'-phosphate + diphosphate = orotate + 5-phospho-alpha-D-ribose 1-diphosphate. The protein operates within pyrimidine metabolism; UMP biosynthesis via de novo pathway; UMP from orotate: step 1/2. Its function is as follows. Catalyzes the transfer of a ribosyl phosphate group from 5-phosphoribose 1-diphosphate to orotate, leading to the formation of orotidine monophosphate (OMP). This chain is Orotate phosphoribosyltransferase, found in Bartonella bacilliformis (strain ATCC 35685 / KC583 / Herrer 020/F12,63).